Consider the following 588-residue polypeptide: Aspartate--tRNA ligase (588 aa).

Glu-174 contacts L-aspartate. The interval 198–201 (QLFK) is aspartate. Arg-220 is a binding site for L-aspartate. ATP-binding positions include 220-222 (RDE) and Gln-229. Position 448 (His-448) interacts with L-aspartate. Glu-482 serves as a coordination point for ATP. Arg-489 contributes to the L-aspartate binding site. 534–537 (GLDR) is a binding site for ATP.

This sequence belongs to the class-II aminoacyl-tRNA synthetase family. Type 1 subfamily. In terms of assembly, homodimer.

The protein resides in the cytoplasm. The enzyme catalyses tRNA(Asp) + L-aspartate + ATP = L-aspartyl-tRNA(Asp) + AMP + diphosphate. Catalyzes the attachment of L-aspartate to tRNA(Asp) in a two-step reaction: L-aspartate is first activated by ATP to form Asp-AMP and then transferred to the acceptor end of tRNA(Asp). This is Aspartate--tRNA ligase from Exiguobacterium sibiricum (strain DSM 17290 / CCUG 55495 / CIP 109462 / JCM 13490 / 255-15).